The primary structure comprises 436 residues: Glutamate-1-semialdehyde 2,1-aminomutase (436 aa).

Position 270 is an N6-(pyridoxal phosphate)lysine (K270).

The protein belongs to the class-III pyridoxal-phosphate-dependent aminotransferase family. HemL subfamily. In terms of assembly, homodimer. Pyridoxal 5'-phosphate is required as a cofactor.

The protein resides in the cytoplasm. It carries out the reaction (S)-4-amino-5-oxopentanoate = 5-aminolevulinate. Its pathway is porphyrin-containing compound metabolism; protoporphyrin-IX biosynthesis; 5-aminolevulinate from L-glutamyl-tRNA(Glu): step 2/2. This Cutibacterium acnes (strain DSM 16379 / KPA171202) (Propionibacterium acnes) protein is Glutamate-1-semialdehyde 2,1-aminomutase.